The chain runs to 601 residues: Cdc42-interacting protein 4 (601 aa).

A required for podosome formation and interaction with AKAP9 and microtubules region spans residues Met-1 to Phe-117. Positions Met-1–Phe-117 are required for translocation to the plasma membrane in response to insulin. In terms of domain architecture, F-BAR spans Met-1–Asp-264. Residues Phe-67 to Val-259 are a coiled coil. Disordered stretches follow at residues Gly-280–Pro-358, Asp-390–Gln-420, and Arg-479–Gly-543. The segment covering Gln-289 to Thr-302 has biased composition (polar residues). Residues Arg-293–Glu-537 form an interaction with CDC42 region. The segment at Arg-293–Asn-601 is interaction with PDE6G. Residues Ser-296, Ser-298, and Ser-299 each carry the phosphoserine modification. Positions Gly-314–Pro-329 are enriched in basic residues. Ser-335 is subject to Phosphoserine. A compositionally biased stretch (low complexity) spans Pro-336 to Pro-346. Residue Ser-351 is modified to Phosphoserine. A coiled-coil region spans residues Thr-388–Asp-481. The 78-residue stretch at His-393 to Glu-470 folds into the REM-1 domain. Residues Leu-407–Gln-420 show a composition bias toward basic and acidic residues. Residues Ala-471 to Asn-601 form a required for interaction with FASLG and localization to lysosomes region. Ser-482 carries the phosphoserine modification. An interaction with DNM2 and WASL region spans residues Ala-487–Pro-541. The segment covering Pro-497–Ser-506 has biased composition (low complexity). A compositionally biased stretch (acidic residues) spans Glu-529 to Pro-538. The interval Glu-529–Asn-601 is interaction with DNM1 and WASL. Residues Pro-538 to Asn-601 form a required for podosome formation region. The SH3 domain occupies Ser-540–Asn-601. An interaction with WAS region spans residues His-544–Asn-601. The segment at Val-546 to Asn-601 is interaction with ARHGAP17, DAAM1, DIAPH1 and DIAPH2.

The protein belongs to the FNBP1 family. In terms of assembly, interacts specifically with GTP-bound RHOQ. Interacts with DNM2 and PDE6G. Homodimerizes, the dimers can polymerize end-to-end to form filamentous structures. Interacts specifically with GTP-bound CDC42. Interacts with AKAP9, ARHGAP17, DAAM1, DIAPH1, DIAPH2, DNM1, FASLG/FASL, GAPVD1, LYN, microtubules, SRC, WAS/WASP and WASL/N-WASP. Interacts with the ligand binding domain of the thyroid receptor (TR) in the presence of thyroid hormone. May interact with CTNNB1 and HD/HTT. Post-translationally, tyrosine phosphorylated. Also phosphorylated by PKA. In terms of tissue distribution, expressed in brain, colon, heart, kidney, liver, lung, megakaryocyte, ovary, pancreas, peripheral blood lymphocytes, placenta, prostate, skeletal muscle, small intestine, spleen, testis, thymus and trachea.

The protein resides in the cytoplasm. It localises to the cytoskeleton. The protein localises to the cell cortex. Its subcellular location is the lysosome. It is found in the golgi apparatus. The protein resides in the cell membrane. It localises to the cell projection. The protein localises to the phagocytic cup. Its subcellular location is the perinuclear region. Its function is as follows. Required for translocation of GLUT4 to the plasma membrane in response to insulin signaling. Required to coordinate membrane tubulation with reorganization of the actin cytoskeleton during endocytosis. Binds to lipids such as phosphatidylinositol 4,5-bisphosphate and phosphatidylserine and promotes membrane invagination and the formation of tubules. Also promotes CDC42-induced actin polymerization by recruiting WASL/N-WASP which in turn activates the Arp2/3 complex. Actin polymerization may promote the fission of membrane tubules to form endocytic vesicles. Required for the formation of podosomes, actin-rich adhesion structures specific to monocyte-derived cells. May be required for the lysosomal retention of FASLG/FASL. The chain is Cdc42-interacting protein 4 (TRIP10) from Homo sapiens (Human).